We begin with the raw amino-acid sequence, 312 residues long: Ribonuclease Z (312 aa).

The Zn(2+) site is built by histidine 62, histidine 64, aspartate 66, histidine 67, histidine 139, aspartate 210, and histidine 268. Aspartate 66 (proton acceptor) is an active-site residue.

Belongs to the RNase Z family. Homodimer. Zn(2+) is required as a cofactor.

It carries out the reaction Endonucleolytic cleavage of RNA, removing extra 3' nucleotides from tRNA precursor, generating 3' termini of tRNAs. A 3'-hydroxy group is left at the tRNA terminus and a 5'-phosphoryl group is left at the trailer molecule.. Zinc phosphodiesterase, which displays some tRNA 3'-processing endonuclease activity. Probably involved in tRNA maturation, by removing a 3'-trailer from precursor tRNA. This chain is Ribonuclease Z, found in Crocosphaera subtropica (strain ATCC 51142 / BH68) (Cyanothece sp. (strain ATCC 51142)).